The primary structure comprises 251 residues: Ubiquitin-conjugating enzyme E2 22 (251 aa).

The UBC core domain occupies 10-156 (NVIKQLAKEL…ARLYTGIHAK (147 aa)). C94 (glycyl thioester intermediate) is an active-site residue. Residues 230-240 (GLAKVQADKKK) show a composition bias toward basic and acidic residues. Residues 230-251 (GLAKVQADKKKVDARKKSLKRL) are disordered. Positions 230-251 (GLAKVQADKKKVDARKKSLKRL) form a coiled coil. Over residues 241–251 (VDARKKSLKRL) the composition is skewed to basic residues.

Belongs to the ubiquitin-conjugating enzyme family. Post-translationally, self-ubiquitinated. In terms of tissue distribution, expressed in seeds, pistils, siliques, hypocotyls and leaves.

The enzyme catalyses S-ubiquitinyl-[E1 ubiquitin-activating enzyme]-L-cysteine + [E2 ubiquitin-conjugating enzyme]-L-cysteine = [E1 ubiquitin-activating enzyme]-L-cysteine + S-ubiquitinyl-[E2 ubiquitin-conjugating enzyme]-L-cysteine.. It participates in protein modification; protein ubiquitination. Accepts the ubiquitin from the E1 complex and catalyzes its covalent attachment to other proteins. This chain is Ubiquitin-conjugating enzyme E2 22 (UBC22), found in Arabidopsis thaliana (Mouse-ear cress).